Reading from the N-terminus, the 311-residue chain is LOB domain-containing protein 10 (311 aa).

An LOB domain is found at 4-105 (TPCAACKLLR…QDLLTAKEEL (102 aa)). Residues 264 to 277 (LQEGQEQTEEGQFL) show a composition bias toward low complexity. Positions 264–311 (LQEGQEQTEEGQFLMQPMGQENLHDEEEEEELEPPVKWRMSENKEASF) are disordered. Over residues 287–296 (HDEEEEEELE) the composition is skewed to acidic residues. Positions 297-311 (PPVKWRMSENKEASF) are enriched in basic and acidic residues.

It belongs to the LOB domain-containing protein family.

The polypeptide is LOB domain-containing protein 10 (LBD10) (Arabidopsis thaliana (Mouse-ear cress)).